A 246-amino-acid polypeptide reads, in one-letter code: Orotidine 5'-phosphate decarboxylase (246 aa).

Substrate-binding positions include D22, K44, 71 to 80, T131, R192, Q201, G221, and R222; that span reads DLKFHDIPNT. K73 serves as the catalytic Proton donor.

This sequence belongs to the OMP decarboxylase family. Type 1 subfamily. In terms of assembly, homodimer.

The enzyme catalyses orotidine 5'-phosphate + H(+) = UMP + CO2. It functions in the pathway pyrimidine metabolism; UMP biosynthesis via de novo pathway; UMP from orotate: step 2/2. Functionally, catalyzes the decarboxylation of orotidine 5'-monophosphate (OMP) to uridine 5'-monophosphate (UMP). The sequence is that of Orotidine 5'-phosphate decarboxylase from Enterobacter sp. (strain 638).